The chain runs to 434 residues: Zinc finger CCCH domain-containing protein 10 (434 aa).

The tract at residues methionine 1–serine 37 is disordered. The span at glycine 12–glycine 35 shows a compositional bias: gly residues. C3H1-type zinc fingers lie at residues alanine 36 to methionine 63, lysine 73 to lysine 99, and lysine 134 to arginine 161. Omega-N-methylarginine is present on residues arginine 185 and arginine 186. The span at proline 196–proline 207 shows a compositional bias: basic and acidic residues. Residues proline 196–proline 217 form a disordered region. A coiled-coil region spans residues glycine 234 to lysine 280. Residues threonine 314 to glutamate 330 are compositionally biased toward polar residues. Residues threonine 314–isoleucine 362 form a disordered region. Residues alanine 339–leucine 358 show a composition bias toward pro residues.

Its subcellular location is the nucleus. Functionally, specific regulator of miRNA biogenesis. Binds, via the C3H1-type zinc finger domains, to the binding motif 5'-GCAGCGC-3' on microRNA pri-MIR143 and negatively regulates the processing to mature microRNA. The sequence is that of Zinc finger CCCH domain-containing protein 10 (ZC3H10) from Homo sapiens (Human).